A 534-amino-acid polypeptide reads, in one-letter code: Probable alanine aminotransferase, mitochondrial (534 aa).

Residues 1 to 18 constitute a mitochondrion transit peptide; the sequence is MFKRSLKVLLSNPPINRV. K352 is subject to N6-(pyridoxal phosphate)lysine.

It belongs to the class-I pyridoxal-phosphate-dependent aminotransferase family. Alanine aminotransferase subfamily. As to quaternary structure, homodimer. The cofactor is pyridoxal 5'-phosphate.

It is found in the mitochondrion matrix. It catalyses the reaction L-alanine + 2-oxoglutarate = pyruvate + L-glutamate. The protein operates within amino-acid degradation; L-alanine degradation via transaminase pathway; pyruvate from L-alanine: step 1/1. In Dictyostelium discoideum (Social amoeba), this protein is Probable alanine aminotransferase, mitochondrial (gpt).